The following is a 121-amino-acid chain: Ribonuclease P protein component (121 aa).

This sequence belongs to the RnpA family. As to quaternary structure, consists of a catalytic RNA component (M1 or rnpB) and a protein subunit.

It catalyses the reaction Endonucleolytic cleavage of RNA, removing 5'-extranucleotides from tRNA precursor.. In terms of biological role, RNaseP catalyzes the removal of the 5'-leader sequence from pre-tRNA to produce the mature 5'-terminus. It can also cleave other RNA substrates such as 4.5S RNA. The protein component plays an auxiliary but essential role in vivo by binding to the 5'-leader sequence and broadening the substrate specificity of the ribozyme. This Geobacillus thermodenitrificans (strain NG80-2) protein is Ribonuclease P protein component.